The following is a 581-amino-acid chain: Proline--tRNA ligase (581 aa).

The protein belongs to the class-II aminoacyl-tRNA synthetase family. ProS type 1 subfamily. As to quaternary structure, homodimer.

It localises to the cytoplasm. The enzyme catalyses tRNA(Pro) + L-proline + ATP = L-prolyl-tRNA(Pro) + AMP + diphosphate. Catalyzes the attachment of proline to tRNA(Pro) in a two-step reaction: proline is first activated by ATP to form Pro-AMP and then transferred to the acceptor end of tRNA(Pro). As ProRS can inadvertently accommodate and process non-cognate amino acids such as alanine and cysteine, to avoid such errors it has two additional distinct editing activities against alanine. One activity is designated as 'pretransfer' editing and involves the tRNA(Pro)-independent hydrolysis of activated Ala-AMP. The other activity is designated 'posttransfer' editing and involves deacylation of mischarged Ala-tRNA(Pro). The misacylated Cys-tRNA(Pro) is not edited by ProRS. This chain is Proline--tRNA ligase, found in Blochmanniella pennsylvanica (strain BPEN).